The chain runs to 437 residues: GTPase Der (437 aa).

EngA-type G domains are found at residues 3–167 and 177–353; these read ALVA…PAEN and PRIA…AHRS. GTP-binding positions include 9 to 16, 56 to 60, 119 to 122, 183 to 190, 230 to 234, and 295 to 298; these read GRPNVGKS, DTGGW, NKVD, GRPNAGKS, DTAGI, and NKWD. The KH-like domain maps to 354–437; it reads TRIPTHKLNE…TPINIFIREK (84 aa).

This sequence belongs to the TRAFAC class TrmE-Era-EngA-EngB-Septin-like GTPase superfamily. EngA (Der) GTPase family. In terms of assembly, associates with the 50S ribosomal subunit.

Its function is as follows. GTPase that plays an essential role in the late steps of ribosome biogenesis. This is GTPase Der from Porphyromonas gingivalis (strain ATCC BAA-308 / W83).